A 358-amino-acid polypeptide reads, in one-letter code: Tyrosinase ustQ (358 aa).

N28 carries an N-linked (GlcNAc...) asparagine glycan. A helical membrane pass occupies residues 37 to 57; the sequence is FVPVYAGLTIISLITVTVSLV. N-linked (GlcNAc...) asparagine glycosylation is found at N91 and N109. Cu cation contacts are provided by H128 and H137. N-linked (GlcNAc...) asparagine glycans are attached at residues N172 and N214. H266, H270, and H292 together coordinate Cu cation. Residues N321 and N325 are each glycosylated (N-linked (GlcNAc...) asparagine).

This sequence belongs to the tyrosinase family. Cu(2+) is required as a cofactor.

The protein localises to the membrane. It carries out the reaction 2 L-dopa + O2 = 2 L-dopaquinone + 2 H2O. It catalyses the reaction L-tyrosine + O2 = L-dopaquinone + H2O. Its pathway is mycotoxin biosynthesis. In terms of biological role, tyrosinase; part of the gene cluster that mediates the biosynthesis of the secondary metabolite ustiloxin B, an antimitotic tetrapeptide. First, ustA is processed by the subtilisin-like endoprotease Kex2 that is outside the ustiloxin B gene cluster, at the C-terminal side of Arg-Lys, after transfer to Golgi apparatus through the endoplasmic reticulum (ER). Cleavage by KEX2 generates 16 peptides YAIG-I to YAIG-XVI. To process the precursor peptide further, at least two peptidases are necessary to cleave the N-terminal and C-terminal sides of the Tyr-Ala-Ile-Gly core peptide which serves as backbone for the synthesis of ustiloxin B, through cyclization and modification of the tyrosine with a non-protein coding amino acid, norvaline. One of the two peptidases must be the serine peptidase ustP; and the other pepdidase is probably ustH. Macrocyclization of the core peptide derived from ustA requires the tyrosinase ustQ, as well as the homologous oxidases ustYa and ustYb, and leads to the production of the first cyclization product N-desmethylustiloxin F. For the formation of N-desmethylustiloxin F, three oxidation steps are required, hydroxylation at the benzylic position, hydroxylation at either the aromatic ring of Tyr or beta-position of Ile, and oxidative cyclization. UstQ may catalyze the oxidation of a phenol moiety, whereas the ustYa and ustYb are most likely responsible for the remaining two-step oxidations. N-desmethylustiloxin F is then methylated by ustM to yield ustiloxin F which in turn substrate of the cytochrome P450 monooxygenase ustC which catalyzes the formation of S-deoxyustiloxin H. The flavoprotein monooxygenases ustF1 and ustF2 then participate in the modification of the side chain of S-deoxyustiloxin H, leading to the synthesis of an oxime intermediate, via ustiloxin H. Finally, carboxylative dehydration performed by the cysteine desulfurase-like protein ustD yields ustiloxin B. The sequence is that of Tyrosinase ustQ from Aspergillus flavus (strain ATCC 200026 / FGSC A1120 / IAM 13836 / NRRL 3357 / JCM 12722 / SRRC 167).